We begin with the raw amino-acid sequence, 516 residues long: Histone H4 transcription factor (516 aa).

3 C2H2-type zinc fingers span residues 15–39 (LQCE…VTQH), 127–151 (FLCL…VEAH), and 167–191 (VLCG…LRSH). The C2H2-type 4; degenerate zinc finger occupies 197–219 (VACPTCGGMFANNTKFLDHIRRQ). C2H2-type zinc fingers lie at residues 227 to 249 (FQCS…MRNH), 253 to 276 (YKCP…RFRH), 282 to 304 (FKCD…LDTH), 310 to 335 (YSCD…RKVH), and 343 to 366 (YRCH…RKKH). Residues 371–516 (PSGHPRFRYK…AAEEPEVQMV (146 aa)) form an interaction with NPAT region. Residues 372–405 (SGHPRFRYKEHEDGYMRLQLVRYESVELTQQLLR) form a required for activation of histone H4 transcription and contributes to DNA-binding region. 2 disordered regions span residues 429 to 456 (TVPG…PASQ) and 486 to 516 (PGEP…VQMV). Residues 436–445 (PQEEAEEEGG) show a composition bias toward acidic residues.

As to quaternary structure, binds MBD2 and a histone deacetylase complex. Interacts with NPAT. In terms of processing, ubiquitinated. Ubiquitination may lead to proteasome-mediated degradation.

The protein localises to the nucleus. Transcriptional repressor that binds to the consensus sequence 5'-CGGACGTT-3' and to the RB1 promoter. Transcriptional activator that promotes histone H4 gene transcription at the G1/S phase transition in conjunction with NPAT. Also activates transcription of the ATM and PRKDC genes. Autoregulates its expression by associating with its own promoter. This chain is Histone H4 transcription factor (HINFP), found in Bos taurus (Bovine).